Here is a 219-residue protein sequence, read N- to C-terminus: Protein-L-isoaspartate O-methyltransferase 2 (219 aa).

Serine 60 is a catalytic residue.

Belongs to the methyltransferase superfamily. L-isoaspartyl/D-aspartyl protein methyltransferase family.

It localises to the cytoplasm. It catalyses the reaction [protein]-L-isoaspartate + S-adenosyl-L-methionine = [protein]-L-isoaspartate alpha-methyl ester + S-adenosyl-L-homocysteine. Its function is as follows. Catalyzes the methyl esterification of L-isoaspartyl residues in peptides and proteins that result from spontaneous decomposition of normal L-aspartyl and L-asparaginyl residues. It plays a role in the repair and/or degradation of damaged proteins. In Archaeoglobus fulgidus (strain ATCC 49558 / DSM 4304 / JCM 9628 / NBRC 100126 / VC-16), this protein is Protein-L-isoaspartate O-methyltransferase 2 (pcm2).